A 364-amino-acid chain; its full sequence is Medium-wave-sensitive opsin 1 (364 aa).

The interval 1–23 is disordered; sequence MTQPWGPQMLAGGQPPESHEDST. The Extracellular portion of the chain corresponds to 1 to 52; sequence MTQPWGPQMLAGGQPPESHEDSTQASIFTYTNSNSTRGPFEGPNFHIAPRWV. The interval 17-43 is required for 11-cis-retinal regeneration; that stretch reads ESHEDSTQASIFTYTNSNSTRGPFEGP. The N-linked (GlcNAc...) asparagine glycan is linked to Asn-34. Residues 53–77 traverse the membrane as a helical segment; that stretch reads YHLTSAWMILVVIASVFTNGLVLVA. Residues 78–89 lie on the Cytoplasmic side of the membrane; that stretch reads TMRFKKLRHPLN. Residues 90 to 115 traverse the membrane as a helical segment; it reads WILVNLAVADLAETVIASTISVVNQF. The Extracellular portion of the chain corresponds to 116–129; sequence YGYFVLGHPLCVVE. A disulfide bridge links Cys-126 with Cys-203. Residues 130 to 149 traverse the membrane as a helical segment; sequence GYTVSLCGITGLWSLAIISW. Over 150-168 the chain is Cytoplasmic; it reads ERWLVVCKPFGNVRFDAKL. A helical transmembrane segment spans residues 169–192; the sequence is AIAGIAFSWIWAAVWTAPPIFGWS. Topologically, residues 193-218 are extracellular; sequence RYWPYGLKTSCGPDVFSGTSYPGVQS. The helical transmembrane segment at 219 to 246 threads the bilayer; the sequence is YMMVLMVTCCIIPLSVIVLCYLQVWMAI. The Cytoplasmic portion of the chain corresponds to 247 to 268; the sequence is RTVAKQQKESESTQKAEKEVTR. The helical transmembrane segment at 269–292 threads the bilayer; that stretch reads MVVVMVFAYCLCWGPYTFFACFAT. The Extracellular segment spans residues 293 to 300; that stretch reads AHPGYSFH. The helical transmembrane segment at 301–325 threads the bilayer; the sequence is PLVAAIPSYFAKSATIYNPIIYVFM. The residue at position 312 (Lys-312) is an N6-(retinylidene)lysine. The Cytoplasmic segment spans residues 326-364; sequence NRQFRNCILQLFGKKVEDSSELSSASRTEASSVSSVSPA.

This sequence belongs to the G-protein coupled receptor 1 family. Opsin subfamily. Monomer. Homodimer. Homotetramer. O-glycosylated. In terms of processing, phosphorylated on some or all of the serine and threonine residues present in the C-terminal region. Expressed in cone photoreceptor cells.

It is found in the membrane. Functionally, visual pigments are the light-absorbing molecules that mediate vision. They consist of an apoprotein, opsin, covalently linked to cis-retinal. May increase spectral sensitivity in dim light. This is Medium-wave-sensitive opsin 1 (OPN1MW) from Oryctolagus cuniculus (Rabbit).